Reading from the N-terminus, the 416-residue chain is Serine hydroxymethyltransferase (416 aa).

Residues L121 and 125–127 (GHL) each bind (6S)-5,6,7,8-tetrahydrofolate. K229 bears the N6-(pyridoxal phosphate)lysine mark.

This sequence belongs to the SHMT family. In terms of assembly, homodimer. Pyridoxal 5'-phosphate is required as a cofactor.

The protein localises to the cytoplasm. It carries out the reaction (6R)-5,10-methylene-5,6,7,8-tetrahydrofolate + glycine + H2O = (6S)-5,6,7,8-tetrahydrofolate + L-serine. Its pathway is one-carbon metabolism; tetrahydrofolate interconversion. It participates in amino-acid biosynthesis; glycine biosynthesis; glycine from L-serine: step 1/1. Functionally, catalyzes the reversible interconversion of serine and glycine with tetrahydrofolate (THF) serving as the one-carbon carrier. This reaction serves as the major source of one-carbon groups required for the biosynthesis of purines, thymidylate, methionine, and other important biomolecules. Also exhibits THF-independent aldolase activity toward beta-hydroxyamino acids, producing glycine and aldehydes, via a retro-aldol mechanism. This chain is Serine hydroxymethyltransferase, found in Neisseria gonorrhoeae (strain NCCP11945).